The sequence spans 490 residues: Betaine aldehyde dehydrogenase (490 aa).

K(+) is bound by residues I27 and D93. 150-152 (GAW) is a binding site for NAD(+). Catalysis depends on K162, which acts as the Charge relay system. 176–179 (KPSE) is an NAD(+) binding site. Residue V180 participates in K(+) binding. Residue 230–233 (GTDT) coordinates NAD(+). Residue L246 coordinates K(+). The Proton acceptor role is filled by E252. 3 residues coordinate NAD(+): G254, C286, and E387. Catalysis depends on C286, which acts as the Nucleophile. C286 carries the post-translational modification Cysteine sulfenic acid (-SOH). The K(+) site is built by K457 and G460. The Charge relay system role is filled by E464.

The protein belongs to the aldehyde dehydrogenase family. In terms of assembly, dimer of dimers. It depends on K(+) as a cofactor.

It carries out the reaction betaine aldehyde + NAD(+) + H2O = glycine betaine + NADH + 2 H(+). It participates in amine and polyamine biosynthesis; betaine biosynthesis via choline pathway; betaine from betaine aldehyde: step 1/1. Its function is as follows. Involved in the biosynthesis of the osmoprotectant glycine betaine. Catalyzes the irreversible oxidation of betaine aldehyde to the corresponding acid. The polypeptide is Betaine aldehyde dehydrogenase (Pseudomonas fluorescens (strain Pf0-1)).